A 151-amino-acid polypeptide reads, in one-letter code: Putative pre-16S rRNA nuclease (151 aa).

The protein belongs to the YqgF nuclease family.

Its subcellular location is the cytoplasm. Functionally, could be a nuclease involved in processing of the 5'-end of pre-16S rRNA. The protein is Putative pre-16S rRNA nuclease of Neisseria meningitidis serogroup B (strain ATCC BAA-335 / MC58).